Here is a 226-residue protein sequence, read N- to C-terminus: Probable endolytic peptidoglycan transglycosylase RlpA (226 aa).

The first 26 residues, 1-26, serve as a signal peptide directing secretion; sequence MERFLGFRTPLGALGVVILLTLILSS. Cys27 carries the N-palmitoyl cysteine lipid modification. Cys27 is lipidated: S-diacylglycerol cysteine.

This sequence belongs to the RlpA family.

It localises to the cell membrane. Functionally, lytic transglycosylase with a strong preference for naked glycan strands that lack stem peptides. The sequence is that of Probable endolytic peptidoglycan transglycosylase RlpA from Aquifex aeolicus (strain VF5).